Consider the following 900-residue polypeptide: Phosphoenolpyruvate carboxylase (900 aa).

Active-site residues include His140 and Lys568.

The protein belongs to the PEPCase type 1 family. Mg(2+) serves as cofactor.

The enzyme catalyses oxaloacetate + phosphate = phosphoenolpyruvate + hydrogencarbonate. Its function is as follows. Forms oxaloacetate, a four-carbon dicarboxylic acid source for the tricarboxylic acid cycle. This is Phosphoenolpyruvate carboxylase from Neisseria gonorrhoeae (strain ATCC 700825 / FA 1090).